The sequence spans 111 residues: Universal stress protein B (111 aa).

Transmembrane regions (helical) follow at residues 1–21 and 90–110; these read MIST…NMAR and FILT…LLIW.

It belongs to the universal stress protein B family.

It localises to the cell inner membrane. In Enterobacter sp. (strain 638), this protein is Universal stress protein B.